Consider the following 463-residue polypeptide: Argininosuccinate lyase (463 aa).

This sequence belongs to the lyase 1 family. Argininosuccinate lyase subfamily.

It localises to the cytoplasm. It catalyses the reaction 2-(N(omega)-L-arginino)succinate = fumarate + L-arginine. It participates in amino-acid biosynthesis; L-arginine biosynthesis; L-arginine from L-ornithine and carbamoyl phosphate: step 3/3. This is Argininosuccinate lyase from Thiobacillus denitrificans (strain ATCC 25259 / T1).